The sequence spans 274 residues: Reaction center protein L chain (274 aa).

Residues 2-32 (ALLSFERKYRVRGGTLIGGDLFDFWVGPYFV) are Cytoplasmic-facing. A helical transmembrane segment spans residues 33-53 (GFFGVSAIFFIFLGVSLIGYA). Residues 54 to 83 (ASQGPTWDPFAISINPPDLKYGLGAAPLLE) are Periplasmic-facing. Residues 84-111 (GGFWQAITVCALGAFISWMLREVEISRK) form a helical membrane-spanning segment. Over 112–115 (LGIG) the chain is Cytoplasmic. A helical membrane pass occupies residues 116–139 (WHVPLAFCVPIFMFCVLQVFRPLL). The Periplasmic portion of the chain corresponds to 140–170 (LGSWGHAFPYGILSHLDWVNNFGYQYLNWHY). (7R,8Z)-bacteriochlorophyll b is bound by residues His154 and His174. Residues 171–198 (NPGHMSSVSFLFVNAMALGLHGGLILSV) form a helical membrane-spanning segment. His191 contacts Fe cation. The Cytoplasmic segment spans residues 199–225 (ANPGDGDKVKTAEHENQYFRDVVGYSI). Phe217 serves as a coordination point for a ubiquinone. The helical transmembrane segment at 226–249 (GALSIHRLGLFLASNIFLTGAFGT) threads the bilayer. His231 lines the Fe cation pocket. The Periplasmic segment spans residues 250-274 (IASGPFWTRGWPEWWGWWLDIPFWS).

Belongs to the reaction center PufL/M/PsbA/D family. Reaction center is composed of four bacteriochlorophylls, two bacteriopheophytins, two ubiquinones, one iron, and three highly hydrophobic polypeptide chains (designated L, M, and H).

The protein resides in the cellular chromatophore membrane. Functionally, the reaction center is a membrane-bound complex that mediates the initial photochemical event in the electron transfer process of photosynthesis. This chain is Reaction center protein L chain (pufL), found in Blastochloris viridis (Rhodopseudomonas viridis).